We begin with the raw amino-acid sequence, 596 residues long: Elongation factor 4 (596 aa).

The 183-residue stretch at 2 to 184 (KHIRNFSIIA…VIVAKIPPPE (183 aa)) folds into the tr-type G domain. GTP is bound by residues 14–19 (DHGKST) and 131–134 (NKID).

This sequence belongs to the TRAFAC class translation factor GTPase superfamily. Classic translation factor GTPase family. LepA subfamily.

The protein resides in the cell inner membrane. It carries out the reaction GTP + H2O = GDP + phosphate + H(+). Functionally, required for accurate and efficient protein synthesis under certain stress conditions. May act as a fidelity factor of the translation reaction, by catalyzing a one-codon backward translocation of tRNAs on improperly translocated ribosomes. Back-translocation proceeds from a post-translocation (POST) complex to a pre-translocation (PRE) complex, thus giving elongation factor G a second chance to translocate the tRNAs correctly. Binds to ribosomes in a GTP-dependent manner. The polypeptide is Elongation factor 4 (Shewanella sp. (strain W3-18-1)).